Consider the following 312-residue polypeptide: tRNA dimethylallyltransferase (312 aa).

15–22 (GPTAAGKS) contacts ATP. Residue 17–22 (TAAGKS) participates in substrate binding. The segment at 40-43 (DSMQ) is interaction with substrate tRNA.

The protein belongs to the IPP transferase family. As to quaternary structure, monomer. Mg(2+) is required as a cofactor.

The catalysed reaction is adenosine(37) in tRNA + dimethylallyl diphosphate = N(6)-dimethylallyladenosine(37) in tRNA + diphosphate. Catalyzes the transfer of a dimethylallyl group onto the adenine at position 37 in tRNAs that read codons beginning with uridine, leading to the formation of N6-(dimethylallyl)adenosine (i(6)A). In Streptomyces griseus subsp. griseus (strain JCM 4626 / CBS 651.72 / NBRC 13350 / KCC S-0626 / ISP 5235), this protein is tRNA dimethylallyltransferase.